Consider the following 102-residue polypeptide: MKRMIRSHGRKTECQMTSAGERRGSAVGAPICGSGTRRGSGANERRDSDVGPIAHSSGTRRGSANETSACTRTDHQKADIGLWFMFLVFGLCSWLAMRYRAQ.

The interval 1–71 (MKRMIRSHGR…GSANETSACT (71 aa)) is disordered. Residues 1–79 (MKRMIRSHGR…CTRTDHQKAD (79 aa)) lie on the Extracellular side of the membrane. Positions 56–71 (SSGTRRGSANETSACT) are enriched in polar residues. N65 carries an N-linked (GlcNAc...) asparagine; by host glycan. The helical transmembrane segment at 80–97 (IGLWFMFLVFGLCSWLAM) threads the bilayer. At 98-102 (RYRAQ) the chain is on the cytoplasmic side.

It belongs to the HHV-5 UL15A protein family.

It is found in the host membrane. This is an uncharacterized protein from Human cytomegalovirus (strain AD169) (HHV-5).